The primary structure comprises 316 residues: DnaJ homolog subfamily B member 13 (316 aa).

The J domain occupies 4–68; it reads DYYSVLGITR…MKRGIYDKFG (65 aa).

In terms of assembly, homodimer. Component of the axonemal radial spoke complex 1 (RS1), at least composed of spoke head proteins RSPH1, RSPH3, RSPH9 and the cilia-specific component RSPH4A or sperm-specific component RSPH6A, spoke stalk proteins RSPH14, DNAJB13, DYDC1, ROPN1L and NME5, and the anchor protein IQUB. Interacts with SUN5. Interacts with IQUB. As to expression, specifically expressed in testis and trachea.

It localises to the cell projection. It is found in the cilium. The protein resides in the flagellum. In terms of biological role, functions as part of axonemal radial spoke complexes that play an important part in the motility of sperm and cilia. The sequence is that of DnaJ homolog subfamily B member 13 (DNAJB13) from Homo sapiens (Human).